The sequence spans 363 residues: Mitogen-activated protein kinase kinase 2 (363 aa).

Ser56 is modified (phosphoserine). One can recognise a Protein kinase domain in the interval 70–330; sequence LDMVKVIGKG…AKELMEHPFL (261 aa). ATP is bound by residues 76–84 and Lys99; that span reads IGKGSSGVV. The active-site Proton acceptor is Asp192. A phosphothreonine mark is found at Thr220, Thr226, and Thr230.

This sequence belongs to the protein kinase superfamily. STE Ser/Thr protein kinase family. MAP kinase kinase subfamily. In terms of assembly, interacts with MEKK1, MPK4 and MPK6. May form a ternary complex composed of MEKK1 and MKK1/MKK2 and MPK4. Interacts with MPK10 and MPK11. Interacts with MAPKKK5 mainly in the cytosol. In terms of processing, phosphorylation at Thr-220 and Thr-226 by MAP kinase kinase kinases positively regulates kinase activity. Phosphorylated by MEKK1 in response to cold. Phosphorylated by MAPKKK5.

It carries out the reaction L-seryl-[protein] + ATP = O-phospho-L-seryl-[protein] + ADP + H(+). It catalyses the reaction L-threonyl-[protein] + ATP = O-phospho-L-threonyl-[protein] + ADP + H(+). The catalysed reaction is L-tyrosyl-[protein] + ATP = O-phospho-L-tyrosyl-[protein] + ADP + H(+). With respect to regulation, activated in response to cold and salt stresses through serine and threonine phosphorylation by MEKK1. Its function is as follows. MEKK1, MKK1/MKK2 and MPK4 function in a signaling pathway that modulates the expression of genes responding to biotic and abiotic stresses and also plays an important role in pathogen defense by negatively regulating innate immunity. Plays a role in abiotic stress tolerance and plant disease resistance through activation of MPK4 and MPK6 by phosphorylation. Acts redundantly with MKK1. This is Mitogen-activated protein kinase kinase 2 (MKK2) from Arabidopsis thaliana (Mouse-ear cress).